Here is a 155-residue protein sequence, read N- to C-terminus: Peptide methionine sulfoxide reductase MsrB (155 aa).

In terms of domain architecture, MsrB spans 15-137 (REALIATLNA…NSVSLTFIPT (123 aa)). Residues cysteine 54, cysteine 57, cysteine 103, and cysteine 106 each coordinate Zn(2+). Cysteine 126 (nucleophile) is an active-site residue.

This sequence belongs to the MsrB Met sulfoxide reductase family. Zn(2+) is required as a cofactor.

The catalysed reaction is L-methionyl-[protein] + [thioredoxin]-disulfide + H2O = L-methionyl-(R)-S-oxide-[protein] + [thioredoxin]-dithiol. The sequence is that of Peptide methionine sulfoxide reductase MsrB from Xylella fastidiosa (strain M23).